Consider the following 376-residue polypeptide: Alanine racemase 1 (376 aa).

Lys40 serves as the catalytic Proton acceptor; specific for D-alanine. At Lys40 the chain carries N6-(pyridoxal phosphate)lysine. Arg138 is a substrate binding site. Tyr268 serves as the catalytic Proton acceptor; specific for L-alanine. Met316 is a substrate binding site.

The protein belongs to the alanine racemase family. The cofactor is pyridoxal 5'-phosphate.

The enzyme catalyses L-alanine = D-alanine. Its pathway is amino-acid biosynthesis; D-alanine biosynthesis; D-alanine from L-alanine: step 1/1. In terms of biological role, catalyzes the interconversion of L-alanine and D-alanine. May also act on other amino acids. This Oceanobacillus iheyensis (strain DSM 14371 / CIP 107618 / JCM 11309 / KCTC 3954 / HTE831) protein is Alanine racemase 1 (alr1).